Consider the following 513-residue polypeptide: Noroxomaritidine synthase 1 (513 aa).

Residues 18 to 34 (ILIAIACLVVFSLLRSA) form a helical membrane-spanning segment. Residue cysteine 458 participates in heme binding.

This sequence belongs to the cytochrome P450 family. It depends on heme as a cofactor. In terms of tissue distribution, mostly expressed in stems, and, to a lower extent, in bulbs, roots, leaves and flowers.

Its subcellular location is the membrane. It carries out the reaction 4'-O-methylnorbelladine + reduced [NADPH--hemoprotein reductase] + O2 = (10bR,4aS)-noroxomaritidine + oxidized [NADPH--hemoprotein reductase] + 2 H2O + H(+). It catalyses the reaction 4'-O-methylnorbelladine + reduced [NADPH--hemoprotein reductase] + O2 = (10bS,4aR)-noroxomaritidine + oxidized [NADPH--hemoprotein reductase] + 2 H2O + H(+). It functions in the pathway alkaloid biosynthesis. In terms of biological role, cytochrome P450 that catalyzes an intramolecular para-para' C-C phenol coupling of 4'-O-methylnorbelladine in alkaloids biosynthesis, including haemanthamine- and crinamine-type alkaloids, promising anticancer agents. Catalyzes the formation of (10bR,4aS)-noroxomaritidine and (10bS,4aR)-noroxomaritidine from 4'-O-methylnorbelladine. The sequence is that of Noroxomaritidine synthase 1 from Narcissus pseudonarcissus (Daffodil).